Consider the following 174-residue polypeptide: Shikimate kinase (174 aa).

15–20 (GTGKST) serves as a coordination point for ATP. Mg(2+) is bound at residue S19. The substrate site is built by D37, R61, and G82. R120 provides a ligand contact to ATP. R138 contacts substrate.

Belongs to the shikimate kinase family. As to quaternary structure, monomer. It depends on Mg(2+) as a cofactor.

It localises to the cytoplasm. The catalysed reaction is shikimate + ATP = 3-phosphoshikimate + ADP + H(+). It functions in the pathway metabolic intermediate biosynthesis; chorismate biosynthesis; chorismate from D-erythrose 4-phosphate and phosphoenolpyruvate: step 5/7. Its function is as follows. Catalyzes the specific phosphorylation of the 3-hydroxyl group of shikimic acid using ATP as a cosubstrate. This is Shikimate kinase from Staphylococcus aureus (strain Mu3 / ATCC 700698).